The primary structure comprises 150 residues: UPF0756 membrane protein PC1_1142 (150 aa).

Helical transmembrane passes span M1–S21, Y51–G71, F82–G102, and A127–I147.

Belongs to the UPF0756 family.

The protein resides in the cell membrane. The protein is UPF0756 membrane protein PC1_1142 of Pectobacterium carotovorum subsp. carotovorum (strain PC1).